A 521-amino-acid polypeptide reads, in one-letter code: UPF0053 protein BU323 (521 aa).

Transmembrane regions (helical) follow at residues 13–33, 49–69, 80–100, 125–145, 150–170, 185–205, and 207–227; these read LLTLVILEVVLGIDNLIFVAI, IGLGLALVMRLALLSLISWIV, FFSLSIRDIILLFGGFFLLFK, FWAVVIQIVVLDAVFSLDAII, MVNQLLIMMIAVILATFLMLL, VVVLCLSFLLMIGFSLVTEAL, and FCIPKGYLYAAIGFSILIEIF. CBS domains lie at 311–370 and 374–434; these read MTPR…KIDA and SSKI…DADE.

It belongs to the UPF0053 family.

Its subcellular location is the cell membrane. The protein is UPF0053 protein BU323 of Buchnera aphidicola subsp. Acyrthosiphon pisum (strain APS) (Acyrthosiphon pisum symbiotic bacterium).